A 474-amino-acid polypeptide reads, in one-letter code: JmjC domain-containing protein F (474 aa).

The interval 247–269 (KTKKQQQQQQTTTTTANNDNDNS) is disordered. The segment covering 251–261 (QQQQQQTTTTT) has biased composition (low complexity). In terms of domain architecture, JmjC spans 305–474 (AYLAQHGLIE…LSLSFWFIKK (170 aa)).

The chain is JmjC domain-containing protein F (jcdF) from Dictyostelium discoideum (Social amoeba).